Consider the following 935-residue polypeptide: Isoleucine--tRNA ligase (935 aa).

The 'HIGH' region signature appears at 58–68 (PYANGNLHLGH). An L-isoleucyl-5'-AMP-binding site is contributed by glutamate 559. A 'KMSKS' region motif is present at residues 600-604 (KMSKS). Lysine 603 is a binding site for ATP. Cysteine 898, cysteine 901, cysteine 918, and cysteine 921 together coordinate Zn(2+).

The protein belongs to the class-I aminoacyl-tRNA synthetase family. IleS type 1 subfamily. In terms of assembly, monomer. It depends on Zn(2+) as a cofactor.

It localises to the cytoplasm. It carries out the reaction tRNA(Ile) + L-isoleucine + ATP = L-isoleucyl-tRNA(Ile) + AMP + diphosphate. Functionally, catalyzes the attachment of isoleucine to tRNA(Ile). As IleRS can inadvertently accommodate and process structurally similar amino acids such as valine, to avoid such errors it has two additional distinct tRNA(Ile)-dependent editing activities. One activity is designated as 'pretransfer' editing and involves the hydrolysis of activated Val-AMP. The other activity is designated 'posttransfer' editing and involves deacylation of mischarged Val-tRNA(Ile). This Haemophilus ducreyi (strain 35000HP / ATCC 700724) protein is Isoleucine--tRNA ligase.